A 541-amino-acid chain; its full sequence is MAAKLIAFDEEARRGLERGMNQLADAVKVTLGPKGRNVVLEKKWGAPTITNDGVSIAKEIELEDPYEKIGAELVKEVAKKTDDVAGDGTTTATVLAQALVREGLRNVAAGANPIGLKRGIDAAVARISEELANLSKEVETKEQIASTASISAGDPQIGEYIAEAMDKVGKEGVITVEEGQTFGLELELAEGMRFDKGYISPYFATDLERMETVLEDPYILIANQKISNNNEFLPVIEKVLQAGRPLVVIAEDVEGTALQTLVVNKIRGTFKSVAIKAPGFGDRRKAMLQDIAILTGGQVITEEVGLKLENTELDMLGRARKVVVTKDETTIVDGAGDASAIAGRVNEIRAEIERTDSDYDREKLQERLARLAGGVAVIKAGAATEVELKERKHRIEDAVRNAKAAVEEGILPGGGVALLQASIAAFEKLELEGDEAIGASIVRRAVEEPLKQIAINAGYEGGVVVEKVKSLEPGIGLNAATGEYTDLFKDGVIDPTKVTRSALQNAASIAGLFLTTEAVIAEKPEKPAANNAGGDMGGMDF.

ATP-binding positions include 30–33, 87–91, G414, 478–480, and D494; these read TLGP, DGTTT, and NAA.

This sequence belongs to the chaperonin (HSP60) family. As to quaternary structure, forms a cylinder of 14 subunits composed of two heptameric rings stacked back-to-back. Interacts with the co-chaperonin GroES.

It is found in the cytoplasm. The enzyme catalyses ATP + H2O + a folded polypeptide = ADP + phosphate + an unfolded polypeptide.. In terms of biological role, together with its co-chaperonin GroES, plays an essential role in assisting protein folding. The GroEL-GroES system forms a nano-cage that allows encapsulation of the non-native substrate proteins and provides a physical environment optimized to promote and accelerate protein folding. The polypeptide is Chaperonin GroEL 1 (Thermobifida fusca (strain YX)).